The sequence spans 859 residues: Homeobox-leucine zipper protein HOX32 (859 aa).

Residues 7–31 are disordered; that stretch reads AAVHGVGRQDRSSPGGGGAPQVDTG. The segment at residues 29-92 is a DNA-binding region (homeobox); that stretch reads DTGKYVRYTP…NRRCREKQRK (64 aa). Residues 100 to 129 adopt a coiled-coil conformation; it reads VNRKLTAMNKLLMEENDRLQKQVSRLVYEN. Residues 146–164 show a composition bias toward polar residues; it reads TSCESVVTSGQHHQQQNPA. Residues 146 to 172 are disordered; it reads TSCESVVTSGQHHQQQNPAATRPQRDA. Residues 171 to 393 enclose the START domain; that stretch reads DANNPAGLLA…LRHIRQIAHE (223 aa).

The protein belongs to the HD-ZIP homeobox family. Class III subfamily. In terms of tissue distribution, expressed in seedlings, roots, stems, leaf sheaths and blades and panicles.

The protein resides in the nucleus. Probable transcription factor. The protein is Homeobox-leucine zipper protein HOX32 (HOX32) of Oryza sativa subsp. indica (Rice).